Consider the following 155-residue polypeptide: Protein SprT-like (155 aa).

The SprT-like domain occupies 7 to 145 (QQHMEEVSLQ…GSCGGRLKQT (139 aa)). His-67 contacts Zn(2+). Glu-68 is an active-site residue. His-71 lines the Zn(2+) pocket.

The protein belongs to the SprT family. Requires Zn(2+) as cofactor.

The protein resides in the cytoplasm. The protein is Protein SprT-like of Listeria innocua serovar 6a (strain ATCC BAA-680 / CLIP 11262).